The following is a 154-amino-acid chain: Toxin YhaV (154 aa).

As to quaternary structure, homohexamer; forms a complex with PrlF (SohA) with stoichiometry PrlF(2)-YhaV(4), possibly as a YhaV(2)-PrlF(2)-YhaV(2) complex like the MazFE complex. May dimerize in solution.

In terms of biological role, toxic component of a type II toxin-antitoxin (TA) system. Has RNase activity in vitro. Acts as a transcription factor. The YhaV/PrlF complex binds the prlF-yhaV operon, probably negatively regulating its expression. The protein is Toxin YhaV (yhaV) of Escherichia coli O157:H7.